Here is a 447-residue protein sequence, read N- to C-terminus: Tektin-4 (447 aa).

Coiled-coil stretches lie at residues 322-348 (LRKT…DKEA) and 375-423 (FRLL…TNSL).

It belongs to the tektin family. Microtubule inner protein component of sperm flagellar doublet microtubules. Ubiquitinated, leading to its degradation. Deubiquitinated by USP16, promoting its stability. As to expression, detected in testis, where it is weakly expressed in round spermatids, and strongly expressed in the flagellum of step 16 elongated spermatids (at protein level). Expressed in spermatozoa. In the sperm flagellum, localizes to the principal piece and midpiece (at protein level). Specifically expressed in testis; not detected in other tissues tested.

It is found in the cytoplasm. The protein resides in the cytoskeleton. The protein localises to the cilium axoneme. Its subcellular location is the flagellum axoneme. Its function is as follows. Microtubule inner protein (MIP) part of the dynein-decorated doublet microtubules (DMTs) in cilia and flagellar axoneme. Forms filamentous polymers in the walls of ciliary and flagellar microtubules. Contributes to normal sperm motility. This chain is Tektin-4 (Tekt4), found in Mus musculus (Mouse).